We begin with the raw amino-acid sequence, 149 residues long: MADQLTDDQIAEFKEAFSLFDKDGDGCITTKELGTVMRSLGQNPTEAELQDMINEVDADGNGTIDFPEFLNLMARKMKDTDSEEELKEAFRVFDKDQNGFISAAELRHVMTNLGEKLTDEEVDEMIREADVDGDGQINYDEFVKVMMAK.

Position 2 is an N-acetylalanine (Ala2). 4 consecutive EF-hand domains span residues 8 to 43, 44 to 79, 81 to 116, and 117 to 149; these read DQIA…LGQN, PTEA…KMKD, DSEE…LGEK, and LTDE…MMAK. Positions 21, 23, 25, 27, 32, 57, 59, 61, 63, 68, 94, 96, 98, and 105 each coordinate Ca(2+). N6,N6,N6-trimethyllysine is present on Lys116. Residues Asp130, Asp132, Asp134, Gln136, and Glu141 each contribute to the Ca(2+) site.

It belongs to the calmodulin family.

In terms of biological role, calmodulin mediates the control of a large number of enzymes, ion channels and other proteins by Ca(2+). Among the enzymes to be stimulated by the calmodulin-Ca(2+) complex are a number of protein kinases and phosphatases. In Oryza sativa subsp. indica (Rice), this protein is Calmodulin-3 (CAM3).